Reading from the N-terminus, the 267-residue chain is Ribosomal RNA small subunit methyltransferase A (267 aa).

The S-adenosyl-L-methionine site is built by asparagine 18, leucine 20, glycine 45, glutamate 66, aspartate 91, and asparagine 112.

This sequence belongs to the class I-like SAM-binding methyltransferase superfamily. rRNA adenine N(6)-methyltransferase family. RsmA subfamily.

It is found in the cytoplasm. The enzyme catalyses adenosine(1518)/adenosine(1519) in 16S rRNA + 4 S-adenosyl-L-methionine = N(6)-dimethyladenosine(1518)/N(6)-dimethyladenosine(1519) in 16S rRNA + 4 S-adenosyl-L-homocysteine + 4 H(+). Its function is as follows. Specifically dimethylates two adjacent adenosines (A1518 and A1519) in the loop of a conserved hairpin near the 3'-end of 16S rRNA in the 30S particle. May play a critical role in biogenesis of 30S subunits. In Shewanella denitrificans (strain OS217 / ATCC BAA-1090 / DSM 15013), this protein is Ribosomal RNA small subunit methyltransferase A.